The primary structure comprises 663 residues: UvrABC system protein B (663 aa).

The segment covering 1-10 (MIDKRDDKPF) has biased composition (basic and acidic residues). Positions 1 to 23 (MIDKRDDKPFKLKSKYKPSGDQP) are disordered. One can recognise a Helicase ATP-binding domain in the interval 31–271 (DNIEGGEKAQ…EQSIAKIQAE (241 aa)). 44 to 51 (GATGTGKT) serves as a coordination point for ATP. The Beta-hairpin motif lies at 97 to 120 (YYDYYQPEAYVPSSDTYIEKDSSV). The region spanning 435–601 (QMDDLLGEIN…TIKKDIRGLI (167 aa)) is the Helicase C-terminal domain. Positions 627 to 662 (KEAINALQKQMQEAAELLDFELAAQMRDLILELKLM) constitute a UVR domain.

This sequence belongs to the UvrB family. As to quaternary structure, forms a heterotetramer with UvrA during the search for lesions. Interacts with UvrC in an incision complex.

It is found in the cytoplasm. In terms of biological role, the UvrABC repair system catalyzes the recognition and processing of DNA lesions. A damage recognition complex composed of 2 UvrA and 2 UvrB subunits scans DNA for abnormalities. Upon binding of the UvrA(2)B(2) complex to a putative damaged site, the DNA wraps around one UvrB monomer. DNA wrap is dependent on ATP binding by UvrB and probably causes local melting of the DNA helix, facilitating insertion of UvrB beta-hairpin between the DNA strands. Then UvrB probes one DNA strand for the presence of a lesion. If a lesion is found the UvrA subunits dissociate and the UvrB-DNA preincision complex is formed. This complex is subsequently bound by UvrC and the second UvrB is released. If no lesion is found, the DNA wraps around the other UvrB subunit that will check the other stand for damage. The chain is UvrABC system protein B from Streptococcus pyogenes serotype M2 (strain MGAS10270).